A 363-amino-acid polypeptide reads, in one-letter code: Peptide chain release factor 1 (363 aa).

Gln237 is modified (N5-methylglutamine).

Belongs to the prokaryotic/mitochondrial release factor family. In terms of processing, methylated by PrmC. Methylation increases the termination efficiency of RF1.

The protein resides in the cytoplasm. Peptide chain release factor 1 directs the termination of translation in response to the peptide chain termination codons UAG and UAA. This chain is Peptide chain release factor 1 (prfA), found in Mycoplasma capricolum subsp. capricolum (strain California kid / ATCC 27343 / NCTC 10154).